Consider the following 610-residue polypeptide: ESX-5 secretion system protein EccA5 (610 aa).

357–364 contributes to the ATP binding site; it reads GPPGTGKT.

Belongs to the CbxX/CfxQ family. In terms of assembly, part of the ESX-5 / type VII secretion system (T7SS), which is composed of cytosolic and membrane components.

The protein resides in the cytoplasm. Functionally, part of an ESX-5 / type VII specialized secretion system (T7SS), which exports several proteins. EccA5 exhibits ATPase activity and may provide energy for the export of ESX-5 substrates. This is ESX-5 secretion system protein EccA5 from Mycobacterium bovis (strain ATCC BAA-935 / AF2122/97).